The sequence spans 417 residues: Cell division protein FtsA (417 aa).

The protein belongs to the FtsA/MreB family. In terms of assembly, self-interacts. Interacts with FtsZ.

The protein resides in the cell inner membrane. In terms of biological role, cell division protein that is involved in the assembly of the Z ring. May serve as a membrane anchor for the Z ring. In Pseudomonas aeruginosa (strain ATCC 15692 / DSM 22644 / CIP 104116 / JCM 14847 / LMG 12228 / 1C / PRS 101 / PAO1), this protein is Cell division protein FtsA.